We begin with the raw amino-acid sequence, 211 residues long: MATLTRQDLNFGQVVADILCEFLEVAIHLILYVRDIYPSGIFQKRQKYNVPVQMSCHPQLNQYIQDTLHCVKPLIEKNEAEKVVVVIMNKEHHPVERFVFEISQPPLLAISSETLLSHVEQLLRAMILKISVCDAVLDSNPPGCTFTVLVHTREAATRNMEKVQVIKDFPWIVADEQEVHMEEAKLIPLKTMTSDILKMQLYVEEKTQKSS.

In terms of domain architecture, HORMA spans 13–203 (QVVADILCEF…SDILKMQLYV (191 aa)).

In terms of assembly, homooligomer. Interacts with rev1. Interacts with rev3l. Interacts with fzr1 (in complex with the anaphase promoting complex APC). May interact with cdc20.

The protein localises to the nucleus. It is found in the cytoplasm. It localises to the cytoskeleton. The protein resides in the spindle. Functionally, adapter protein able to interact with different proteins and involved in different biological processes. Mediates the interaction between the error-prone DNA polymerase zeta catalytic subunit rev3l and the inserter polymerase rev1, thereby mediating the second polymerase switching in translesion DNA synthesis. Translesion DNA synthesis releases the replication blockade of replicative polymerases, stalled in presence of DNA lesions. May also play a role in signal transduction in response to DNA damage. May regulate the activation of the anaphase promoting complex APC thereby regulating progression through the cell cycle. Through transcriptional regulation may play a role in epithelial-mesenchymal transdifferentiation. The chain is Mitotic spindle assembly checkpoint protein MAD2B (mad2l2) from Danio rerio (Zebrafish).